The chain runs to 164 residues: Transcription antitermination protein NusB (164 aa).

It belongs to the NusB family.

Its function is as follows. Involved in transcription antitermination. Required for transcription of ribosomal RNA (rRNA) genes. Binds specifically to the boxA antiterminator sequence of the ribosomal RNA (rrn) operons. The polypeptide is Transcription antitermination protein NusB (Desulfovibrio desulfuricans (strain ATCC 27774 / DSM 6949 / MB)).